The sequence spans 26 residues: Mucus envelope protein (26 aa).

Post-translationally, glycosylated. In terms of tissue distribution, produced by the opercular gland in the gill cavity and secreted as part of the mucus cocoon.

The protein resides in the secreted. Exhibits antibacterial activity. May play a role in protection against parasite settlement. This chain is Mucus envelope protein, found in Scarus vetula (Queen parrotfish).